Here is a 147-residue protein sequence, read N- to C-terminus: Large ribosomal subunit protein uL16 (147 aa).

It belongs to the universal ribosomal protein uL16 family. As to quaternary structure, part of the 50S ribosomal subunit.

In terms of biological role, binds 23S rRNA and is also seen to make contacts with the A and possibly P site tRNAs. In Lactobacillus delbrueckii subsp. bulgaricus (strain ATCC 11842 / DSM 20081 / BCRC 10696 / JCM 1002 / NBRC 13953 / NCIMB 11778 / NCTC 12712 / WDCM 00102 / Lb 14), this protein is Large ribosomal subunit protein uL16.